Here is a 223-residue protein sequence, read N- to C-terminus: DNA mismatch repair protein MutH (223 aa).

This sequence belongs to the MutH family.

The protein resides in the cytoplasm. Functionally, sequence-specific endonuclease that cleaves unmethylated GATC sequences. It is involved in DNA mismatch repair. The polypeptide is DNA mismatch repair protein MutH (Shewanella sp. (strain W3-18-1)).